The following is a 348-amino-acid chain: Protein RecA (348 aa).

67 to 74 provides a ligand contact to ATP; sequence GPESSGKT.

Belongs to the RecA family.

The protein resides in the cytoplasm. In terms of biological role, can catalyze the hydrolysis of ATP in the presence of single-stranded DNA, the ATP-dependent uptake of single-stranded DNA by duplex DNA, and the ATP-dependent hybridization of homologous single-stranded DNAs. It interacts with LexA causing its activation and leading to its autocatalytic cleavage. In Kineococcus radiotolerans (strain ATCC BAA-149 / DSM 14245 / SRS30216), this protein is Protein RecA.